The following is a 159-amino-acid chain: U-actitoxin-Avd13a/b (159 aa).

An N-terminal signal peptide occupies residues 1–18 (MKSIFLVFFAVCLVKAEA). The propeptide occupies 19–26 (GKGRKREP). 2 disulfide bridges follow: C33–C45 and C36–C52. A propeptide spanning residues 59–60 (EP) is cleaved from the precursor. 2 disulfide bridges follow: C67–C79 and C70–C86. Residues 93 to 94 (EP) constitute a propeptide that is removed on maturation. Cystine bridges form between C101–C113 and C104–C120. Residues 127 to 128 (EP) constitute a propeptide that is removed on maturation. 2 disulfide bridges follow: C135–C147 and C138–C154.

It belongs to the sea anemone BBH family.

It localises to the secreted. Its subcellular location is the nematocyst. Functionally, inhibits ion channels. The chain is U-actitoxin-Avd13a/b from Anemonia viridis (Snakelocks anemone).